Reading from the N-terminus, the 195-residue chain is Cysteine/O-acetylserine efflux protein (195 aa).

A run of 5 helical transmembrane segments spans residues 47–67 (SLGF…LAVI), 70–90 (AAVH…AWKI), 105–125 (ISFW…LYGV), 142–162 (VVGV…CWAL), and 177–194 (QLNI…VRIF).

This sequence belongs to the Rht family.

It localises to the cell inner membrane. It carries out the reaction O-acetyl-L-serine(in) = O-acetyl-L-serine(out). It catalyses the reaction L-cysteine(in) = L-cysteine(out). Functionally, exporter of O-acetylserine (OAS) and cysteine. The protein is Cysteine/O-acetylserine efflux protein (eamB) of Shigella boydii serotype 4 (strain Sb227).